A 184-amino-acid polypeptide reads, in one-letter code: NADH-quinone oxidoreductase subunit B (184 aa).

Residues C63, C64, C128, and C158 each coordinate [4Fe-4S] cluster.

The protein belongs to the complex I 20 kDa subunit family. In terms of assembly, NDH-1 is composed of 14 different subunits. Subunits NuoB, C, D, E, F, and G constitute the peripheral sector of the complex. [4Fe-4S] cluster serves as cofactor.

It is found in the cell inner membrane. The catalysed reaction is a quinone + NADH + 5 H(+)(in) = a quinol + NAD(+) + 4 H(+)(out). Functionally, NDH-1 shuttles electrons from NADH, via FMN and iron-sulfur (Fe-S) centers, to quinones in the respiratory chain. The immediate electron acceptor for the enzyme in this species is believed to be ubiquinone. Couples the redox reaction to proton translocation (for every two electrons transferred, four hydrogen ions are translocated across the cytoplasmic membrane), and thus conserves the redox energy in a proton gradient. The protein is NADH-quinone oxidoreductase subunit B of Xanthomonas oryzae pv. oryzae (strain MAFF 311018).